The sequence spans 258 residues: Phosphate import ATP-binding protein PstB (258 aa).

In terms of domain architecture, ABC transporter spans 13 to 253 (ITVENLNLWY…PREKSTEDYI (241 aa)). 45–52 (GPSGCGKS) is an ATP binding site.

It belongs to the ABC transporter superfamily. Phosphate importer (TC 3.A.1.7) family. As to quaternary structure, the complex is composed of two ATP-binding proteins (PstB), two transmembrane proteins (PstC and PstA) and a solute-binding protein (PstS).

The protein resides in the cell membrane. It carries out the reaction phosphate(out) + ATP + H2O = ADP + 2 phosphate(in) + H(+). Its function is as follows. Part of the ABC transporter complex PstSACB involved in phosphate import. Responsible for energy coupling to the transport system. The sequence is that of Phosphate import ATP-binding protein PstB from Methanosarcina mazei (strain ATCC BAA-159 / DSM 3647 / Goe1 / Go1 / JCM 11833 / OCM 88) (Methanosarcina frisia).